The following is a 172-amino-acid chain: Shikimate kinase (172 aa).

14–19 (GAGKST) provides a ligand contact to ATP. Residue Ser-18 coordinates Mg(2+). Substrate is bound by residues Asp-36, Arg-60, and Gly-82. Arg-120 contributes to the ATP binding site. Arg-139 is a binding site for substrate. Gln-156 lines the ATP pocket.

It belongs to the shikimate kinase family. Monomer. Mg(2+) is required as a cofactor.

The protein resides in the cytoplasm. It catalyses the reaction shikimate + ATP = 3-phosphoshikimate + ADP + H(+). The protein operates within metabolic intermediate biosynthesis; chorismate biosynthesis; chorismate from D-erythrose 4-phosphate and phosphoenolpyruvate: step 5/7. Functionally, catalyzes the specific phosphorylation of the 3-hydroxyl group of shikimic acid using ATP as a cosubstrate. The chain is Shikimate kinase from Vibrio vulnificus (strain CMCP6).